Consider the following 27-residue polypeptide: ADKKIALVGAGNIGGTLAHLIGLKXLL.

Residue 9 to 14 coordinates NAD(+); sequence GAGNIG.

The protein belongs to the LDH/MDH superfamily. MDH type 3 family.

It carries out the reaction (S)-malate + NAD(+) = oxaloacetate + NADH + H(+). Its function is as follows. Catalyzes the reversible oxidation of malate to oxaloacetate. This is Malate dehydrogenase (mdh) from Rhodospirillum rubrum.